Reading from the N-terminus, the 326-residue chain is Fructose-1,6-bisphosphatase class 1 (326 aa).

It belongs to the FBPase class 1 family. As to quaternary structure, homotetramer.

The protein localises to the cytoplasm. The catalysed reaction is beta-D-fructose 1,6-bisphosphate + H2O = beta-D-fructose 6-phosphate + phosphate. Its pathway is carbohydrate biosynthesis; gluconeogenesis. This chain is Fructose-1,6-bisphosphatase class 1, found in Methylobacterium sp. (strain 4-46).